The sequence spans 151 residues: UPF0735 ACT domain-containing protein SAUSA300_1599 (151 aa).

One can recognise an ACT domain in the interval 74 to 149 (TLILYVTDIV…YVSKVELISM (76 aa)).

It belongs to the UPF0735 family.

This Staphylococcus aureus (strain USA300) protein is UPF0735 ACT domain-containing protein SAUSA300_1599.